Reading from the N-terminus, the 151-residue chain is MKYQQLENLESGWKWKYLVKKHREGELITRYVEASAAKEAVDLLLGMENEPVRVLGWIDQHMNPALQNRLKQTIRARRKRHFNAEHQHTRKKSIDLEFMVWQRLAGLAQRRGITLSETIVQLIEDAERKEKYENHMSTLKQDLQALLGKKE.

It belongs to the MatP family. Homodimer.

Its subcellular location is the cytoplasm. Required for spatial organization of the terminus region of the chromosome (Ter macrodomain) during the cell cycle. Prevents early segregation of duplicated Ter macrodomains during cell division. Binds specifically to matS, which is a 13 bp signature motif repeated within the Ter macrodomain. The chain is Macrodomain Ter protein from Cronobacter sakazakii (strain ATCC BAA-894) (Enterobacter sakazakii).